The sequence spans 400 residues: Queuine tRNA-ribosyltransferase (400 aa).

Catalysis depends on Asp93, which acts as the Proton acceptor. Residues 93-97 (DSGGF), Asp147, Gln190, and Gly217 each bind substrate. The interval 248 to 254 (GVGSPED) is RNA binding. Residue Asp267 is the Nucleophile of the active site. The segment at 272–276 (TRIAR) is RNA binding; important for wobble base 34 recognition. Residues Cys305, Cys307, Cys310, and His336 each coordinate Zn(2+). Positions 375–400 (RRERARAAGGAGHAPGPAEPLLPENR) are disordered. The segment covering 388–400 (APGPAEPLLPENR) has biased composition (low complexity).

This sequence belongs to the queuine tRNA-ribosyltransferase family. In terms of assembly, homodimer. Within each dimer, one monomer is responsible for RNA recognition and catalysis, while the other monomer binds to the replacement base PreQ1. Zn(2+) is required as a cofactor.

It carries out the reaction 7-aminomethyl-7-carbaguanine + guanosine(34) in tRNA = 7-aminomethyl-7-carbaguanosine(34) in tRNA + guanine. The protein operates within tRNA modification; tRNA-queuosine biosynthesis. Its function is as follows. Catalyzes the base-exchange of a guanine (G) residue with the queuine precursor 7-aminomethyl-7-deazaguanine (PreQ1) at position 34 (anticodon wobble position) in tRNAs with GU(N) anticodons (tRNA-Asp, -Asn, -His and -Tyr). Catalysis occurs through a double-displacement mechanism. The nucleophile active site attacks the C1' of nucleotide 34 to detach the guanine base from the RNA, forming a covalent enzyme-RNA intermediate. The proton acceptor active site deprotonates the incoming PreQ1, allowing a nucleophilic attack on the C1' of the ribose to form the product. After dissociation, two additional enzymatic reactions on the tRNA convert PreQ1 to queuine (Q), resulting in the hypermodified nucleoside queuosine (7-(((4,5-cis-dihydroxy-2-cyclopenten-1-yl)amino)methyl)-7-deazaguanosine). The protein is Queuine tRNA-ribosyltransferase of Symbiobacterium thermophilum (strain DSM 24528 / JCM 14929 / IAM 14863 / T).